The primary structure comprises 630 residues: tRNA uridine 5-carboxymethylaminomethyl modification enzyme MnmG (630 aa).

13–18 (GGGHAG) contacts FAD. 273 to 287 (GPRYCPSIEDKVNRF) lines the NAD(+) pocket.

Belongs to the MnmG family. Homodimer. Heterotetramer of two MnmE and two MnmG subunits. FAD is required as a cofactor.

It localises to the cytoplasm. NAD-binding protein involved in the addition of a carboxymethylaminomethyl (cmnm) group at the wobble position (U34) of certain tRNAs, forming tRNA-cmnm(5)s(2)U34. The polypeptide is tRNA uridine 5-carboxymethylaminomethyl modification enzyme MnmG (Saccharophagus degradans (strain 2-40 / ATCC 43961 / DSM 17024)).